The primary structure comprises 314 residues: Putative S-adenosyl-L-methionine-dependent methyltransferase MAP_4191c (314 aa).

S-adenosyl-L-methionine-binding positions include D138 and 167–168 (DL).

This sequence belongs to the UPF0677 family.

Functionally, exhibits S-adenosyl-L-methionine-dependent methyltransferase activity. The polypeptide is Putative S-adenosyl-L-methionine-dependent methyltransferase MAP_4191c (Mycolicibacterium paratuberculosis (strain ATCC BAA-968 / K-10) (Mycobacterium paratuberculosis)).